A 251-amino-acid chain; its full sequence is uncharacterized protein (251 aa).

The first 18 residues, M1 to A18, serve as a signal peptide directing secretion.

The protein belongs to the MlaA family.

This is an uncharacterized protein from Rickettsia felis (strain ATCC VR-1525 / URRWXCal2) (Rickettsia azadi).